A 427-amino-acid polypeptide reads, in one-letter code: Enolase 2 (427 aa).

A (2R)-2-phosphoglycerate-binding site is contributed by glutamine 165. Glutamate 207 acts as the Proton donor in catalysis. Residues aspartate 244, glutamate 287, and aspartate 314 each coordinate Mg(2+). (2R)-2-phosphoglycerate contacts are provided by lysine 339, arginine 368, serine 369, and lysine 390. Lysine 339 acts as the Proton acceptor in catalysis.

This sequence belongs to the enolase family. Component of the RNA degradosome, a multiprotein complex involved in RNA processing and mRNA degradation. Mg(2+) is required as a cofactor.

It is found in the cytoplasm. The protein resides in the secreted. The protein localises to the cell surface. It catalyses the reaction (2R)-2-phosphoglycerate = phosphoenolpyruvate + H2O. It functions in the pathway carbohydrate degradation; glycolysis; pyruvate from D-glyceraldehyde 3-phosphate: step 4/5. In terms of biological role, catalyzes the reversible conversion of 2-phosphoglycerate (2-PG) into phosphoenolpyruvate (PEP). It is essential for the degradation of carbohydrates via glycolysis. The polypeptide is Enolase 2 (Pseudomonas syringae pv. tomato (strain ATCC BAA-871 / DC3000)).